The sequence spans 289 residues: Lipoyl synthase (289 aa).

7 residues coordinate [4Fe-4S] cluster: cysteine 33, cysteine 38, cysteine 44, cysteine 59, cysteine 63, cysteine 66, and serine 274. The 219-residue stretch at phenylalanine 45–leucine 263 folds into the Radical SAM core domain.

It belongs to the radical SAM superfamily. Lipoyl synthase family. [4Fe-4S] cluster serves as cofactor.

The protein resides in the cytoplasm. The catalysed reaction is [[Fe-S] cluster scaffold protein carrying a second [4Fe-4S](2+) cluster] + N(6)-octanoyl-L-lysyl-[protein] + 2 oxidized [2Fe-2S]-[ferredoxin] + 2 S-adenosyl-L-methionine + 4 H(+) = [[Fe-S] cluster scaffold protein] + N(6)-[(R)-dihydrolipoyl]-L-lysyl-[protein] + 4 Fe(3+) + 2 hydrogen sulfide + 2 5'-deoxyadenosine + 2 L-methionine + 2 reduced [2Fe-2S]-[ferredoxin]. It participates in protein modification; protein lipoylation via endogenous pathway; protein N(6)-(lipoyl)lysine from octanoyl-[acyl-carrier-protein]: step 2/2. In terms of biological role, catalyzes the radical-mediated insertion of two sulfur atoms into the C-6 and C-8 positions of the octanoyl moiety bound to the lipoyl domains of lipoate-dependent enzymes, thereby converting the octanoylated domains into lipoylated derivatives. This Synechococcus sp. (strain RCC307) protein is Lipoyl synthase.